The primary structure comprises 445 residues: 23S rRNA (uracil(1939)-C(5))-methyltransferase RlmD (445 aa).

Positions 1–21 are disordered; that stretch reads MARRRKQLPETPEPASIETLS. The TRAM domain maps to 5-64; that stretch reads RKQLPETPEPASIETLSHDGRGIARRDGKTTFIDNALPGEEVMFKFTYMRRKFDEGKAVE. Positions 77, 83, 86, and 165 each coordinate [4Fe-4S] cluster. Q275, F304, N309, E325, D352, and D373 together coordinate S-adenosyl-L-methionine. Catalysis depends on C399, which acts as the Nucleophile.

It belongs to the class I-like SAM-binding methyltransferase superfamily. RNA M5U methyltransferase family. RlmD subfamily.

The catalysed reaction is uridine(1939) in 23S rRNA + S-adenosyl-L-methionine = 5-methyluridine(1939) in 23S rRNA + S-adenosyl-L-homocysteine + H(+). Functionally, catalyzes the formation of 5-methyl-uridine at position 1939 (m5U1939) in 23S rRNA. The polypeptide is 23S rRNA (uracil(1939)-C(5))-methyltransferase RlmD (Alcanivorax borkumensis (strain ATCC 700651 / DSM 11573 / NCIMB 13689 / SK2)).